Here is a 228-residue protein sequence, read N- to C-terminus: Cytochrome c oxidase subunit 2 (228 aa).

Residues 1–26 are Mitochondrial intermembrane-facing; it reads MPNWGQVMFQDAASSVMLQLVSFHDH. Residues 27–47 form a helical membrane-spanning segment; it reads ALLVLTLVLTVVGYALLALML. The Mitochondrial matrix segment spans residues 48 to 60; it reads NKQVNRYIMEAQT. The chain crosses the membrane as a helical span at residues 61-81; the sequence is VETIWTILPALILLVLALPSL. Topologically, residues 82-228 are mitochondrial intermembrane; the sequence is RILYITDEVS…FMSWVSNFKP (147 aa). The Cu cation site is built by H161, C196, E198, C200, H204, and M207. E198 contributes to the Mg(2+) binding site.

Belongs to the cytochrome c oxidase subunit 2 family. As to quaternary structure, component of the cytochrome c oxidase (complex IV, CIV), a multisubunit enzyme composed of a catalytic core of 3 subunits and several supernumerary subunits. The complex exists as a monomer or a dimer and forms supercomplexes (SCs) in the inner mitochondrial membrane with ubiquinol-cytochrome c oxidoreductase (cytochrome b-c1 complex, complex III, CIII). Requires Cu cation as cofactor.

The protein resides in the mitochondrion inner membrane. The enzyme catalyses 4 Fe(II)-[cytochrome c] + O2 + 8 H(+)(in) = 4 Fe(III)-[cytochrome c] + 2 H2O + 4 H(+)(out). In terms of biological role, component of the cytochrome c oxidase, the last enzyme in the mitochondrial electron transport chain which drives oxidative phosphorylation. The respiratory chain contains 3 multisubunit complexes succinate dehydrogenase (complex II, CII), ubiquinol-cytochrome c oxidoreductase (cytochrome b-c1 complex, complex III, CIII) and cytochrome c oxidase (complex IV, CIV), that cooperate to transfer electrons derived from NADH and succinate to molecular oxygen, creating an electrochemical gradient over the inner membrane that drives transmembrane transport and the ATP synthase. Cytochrome c oxidase is the component of the respiratory chain that catalyzes the reduction of oxygen to water. Electrons originating from reduced cytochrome c in the intermembrane space (IMS) are transferred via the dinuclear copper A center (CU(A)) of subunit 2 and heme A of subunit 1 to the active site in subunit 1, a binuclear center (BNC) formed by heme A3 and copper B (CU(B)). The BNC reduces molecular oxygen to 2 water molecules using 4 electrons from cytochrome c in the IMS and 4 protons from the mitochondrial matrix. In Lumbricus terrestris (Common earthworm), this protein is Cytochrome c oxidase subunit 2 (COII).